Here is a 185-residue protein sequence, read N- to C-terminus: Ribosome-recycling factor (185 aa).

This sequence belongs to the RRF family.

Its subcellular location is the cytoplasm. Functionally, responsible for the release of ribosomes from messenger RNA at the termination of protein biosynthesis. May increase the efficiency of translation by recycling ribosomes from one round of translation to another. This Buchnera aphidicola subsp. Acyrthosiphon pisum (strain APS) (Acyrthosiphon pisum symbiotic bacterium) protein is Ribosome-recycling factor.